We begin with the raw amino-acid sequence, 87 residues long: Type 3 secretion system needle filament protein (87 aa).

Belongs to the SctF family. In terms of assembly, the core secretion machinery of the T3SS is composed of approximately 20 different proteins, including cytoplasmic components, a base, an export apparatus and a needle. This subunit polymerizes and forms the helical needle filament. In Y.enterocolitica E40, the needles are composed of 139 (plus-minus 19) YscF/SctF subunits.

Its subcellular location is the secreted. The protein localises to the cell surface. The secretion and/or polymerization may be controlled by the type III secretion system regulator YopR. Component of the type III secretion system (T3SS), also called injectisome, which is used to inject bacterial effector proteins into eukaryotic host cells. YscF/SctF forms the external needle filament that protrudes from the bacterial surface. The needle is not sufficient by itself for the formation of a pore allowing translocation of the Yop effectors across the host cell membrane. This is Type 3 secretion system needle filament protein from Yersinia enterocolitica.